Reading from the N-terminus, the 97-residue chain is Signal recognition particle 19 kDa protein (97 aa).

It belongs to the SRP19 family. Part of the signal recognition particle protein translocation system, which is composed of SRP and FtsY. Archaeal SRP consists of a 7S RNA molecule of 300 nucleotides and two protein subunits: SRP54 and SRP19.

The protein localises to the cytoplasm. Its function is as follows. Involved in targeting and insertion of nascent membrane proteins into the cytoplasmic membrane. Binds directly to 7S RNA and mediates binding of the 54 kDa subunit of the SRP. In Pyrobaculum calidifontis (strain DSM 21063 / JCM 11548 / VA1), this protein is Signal recognition particle 19 kDa protein.